A 291-amino-acid chain; its full sequence is Sulfate transport system permease protein CysW (291 aa).

The Cytoplasmic segment spans residues 1-22 (MAEVTQLKRYDARPINWGKWFL). The helical transmembrane segment at 23–43 (IGIGMLVSAFILLVPMIYIFV) threads the bilayer. Residues 44–69 (QAFSKGLMPVLQNLADPDMLHAIWLT) are Periplasmic-facing. The ABC transmembrane type-1 domain occupies 66–270 (IWLTVMIALI…MAIITLFLKS (205 aa)). A helical membrane pass occupies residues 70–90 (VMIALIAVPVNLVFGILLAWL). Over 91-104 (VTRFNFPGRQLLLT) the chain is Cytoplasmic. A helical membrane pass occupies residues 105-125 (LLDIPFAVSPVVAGLVYLLFY). Topologically, residues 126 to 141 (GSNGPLGGWLDEHNLQ) are periplasmic. Residues 142–162 (IMFSWPGMVLVTIFVTCPFVV) form a helical membrane-spanning segment. Over 163–200 (RELVPVMLSQGSQEDEAAILLGASGWQMFRRVTLPNIR) the chain is Cytoplasmic. A helical transmembrane segment spans residues 201–221 (WALLYGVVLTNARAIGEFGAV). The Periplasmic segment spans residues 222-247 (SVVSGSIRGETLSLPLQIELLEQDYN). A helical membrane pass occupies residues 248–268 (TVGSFTAAALLTLMAIITLFL). Topologically, residues 269–291 (KSMLQWRLENQEKRAQQEEHHEH) are cytoplasmic.

The protein belongs to the binding-protein-dependent transport system permease family. CysTW subfamily. In terms of assembly, the complex is composed of two ATP-binding proteins (CysA), two transmembrane proteins (CysT and CysW) and a solute-binding protein (CysP).

Its subcellular location is the cell inner membrane. Functionally, part of the ABC transporter complex CysAWTP (TC 3.A.1.6.1) involved in sulfate/thiosulfate import. Probably responsible for the translocation of the substrate across the membrane. This Escherichia coli O6:H1 (strain CFT073 / ATCC 700928 / UPEC) protein is Sulfate transport system permease protein CysW (cysW).